A 191-amino-acid polypeptide reads, in one-letter code: Phosphopantetheine adenylyltransferase (191 aa).

Substrate is bound at residue Ser-8. Residues 8–9 and His-16 contribute to the ATP site; that span reads SF. Substrate contacts are provided by Lys-40, Thr-72, and Arg-86. Residues 87 to 89, Glu-97, and 122 to 128 each bind ATP; these read GLR and YSFLSSS.

The protein belongs to the bacterial CoaD family. In terms of assembly, homohexamer. It depends on Mg(2+) as a cofactor.

The protein localises to the cytoplasm. It catalyses the reaction (R)-4'-phosphopantetheine + ATP + H(+) = 3'-dephospho-CoA + diphosphate. The protein operates within cofactor biosynthesis; coenzyme A biosynthesis; CoA from (R)-pantothenate: step 4/5. Its function is as follows. Reversibly transfers an adenylyl group from ATP to 4'-phosphopantetheine, yielding dephospho-CoA (dPCoA) and pyrophosphate. The polypeptide is Phosphopantetheine adenylyltransferase (Nostoc sp. (strain PCC 7120 / SAG 25.82 / UTEX 2576)).